Reading from the N-terminus, the 193-residue chain is MRLTDIEIEQALDNGTIVIEPRPSIDAISGVSVDVRLGGQFRVFKDHTAPFIDLSGPSGEMQAALDRVMSEIIEIPDGEAFFLHPGELALAVTYESVTLPADIVGWLDGRSSLARLGLMVHVTAHRIDPGWQGKIVLEFYNSGKLPLALRPRMTIGALNFERLSGPVARPYNTRKNAKYKDQQEAVASRISQD.

DCTP contacts are provided by residues 110 to 115, D128, 136 to 138, Y171, K178, and Q182; these read RSSLAR and VLE. Catalysis depends on E138, which acts as the Proton donor/acceptor. The disordered stretch occupies residues 174-193; the sequence is RKNAKYKDQQEAVASRISQD.

Belongs to the dCTP deaminase family. In terms of assembly, homotrimer.

The catalysed reaction is dCTP + H2O + H(+) = dUTP + NH4(+). It participates in pyrimidine metabolism; dUMP biosynthesis; dUMP from dCTP (dUTP route): step 1/2. In terms of biological role, catalyzes the deamination of dCTP to dUTP. This is dCTP deaminase from Shewanella sp. (strain W3-18-1).